The following is a 192-amino-acid chain: dTTP/UTP pyrophosphatase (192 aa).

D75 acts as the Proton acceptor in catalysis.

The protein belongs to the Maf family. YhdE subfamily. It depends on a divalent metal cation as a cofactor.

The protein localises to the cytoplasm. The catalysed reaction is dTTP + H2O = dTMP + diphosphate + H(+). It catalyses the reaction UTP + H2O = UMP + diphosphate + H(+). Functionally, nucleoside triphosphate pyrophosphatase that hydrolyzes dTTP and UTP. May have a dual role in cell division arrest and in preventing the incorporation of modified nucleotides into cellular nucleic acids. The protein is dTTP/UTP pyrophosphatase of Pelodictyon phaeoclathratiforme (strain DSM 5477 / BU-1).